A 394-amino-acid chain; its full sequence is Probable aspartate/prephenate aminotransferase (394 aa).

Positions 40, 126, and 176 each coordinate L-aspartate. K239 is modified (N6-(pyridoxal phosphate)lysine). Position 370 (R370) interacts with L-aspartate.

Belongs to the class-I pyridoxal-phosphate-dependent aminotransferase family. In terms of assembly, homodimer. It depends on pyridoxal 5'-phosphate as a cofactor.

It is found in the cytoplasm. The catalysed reaction is L-aspartate + 2-oxoglutarate = oxaloacetate + L-glutamate. It catalyses the reaction L-arogenate + oxaloacetate = prephenate + L-aspartate. Functionally, catalyzes the reversible conversion of aspartate and 2-oxoglutarate to glutamate and oxaloacetate. Can also transaminate prephenate in the presence of aspartate. This is Probable aspartate/prephenate aminotransferase (aspC) from Aquifex aeolicus (strain VF5).